Consider the following 803-residue polypeptide: Ras GTPase-activating protein 4B (803 aa).

C2 domains lie at 1 to 105 (MAKR…SGWA) and 116 to 232 (VQGE…EGWF). Residues aspartate 21, aspartate 27, aspartate 74, aspartate 76, serine 79, aspartate 82, aspartate 149, aspartate 155, aspartate 202, aspartate 204, serine 207, and aspartate 210 each contribute to the Ca(2+) site. Positions 318–546 (GLAKDFLDLL…AQLKDFITKL (229 aa)) constitute a Ras-GAP domain. Positions 566–673 (PPVKEGPLFI…WLSALRKVSI (108 aa)) constitute a PH domain. The Btk-type zinc-finger motif lies at 675–711 (NTGLLGSYHPGVFRGDKWSCCHQKEKTGQGCDKTRSR). Zn(2+) contacts are provided by histidine 683, cysteine 694, cysteine 695, and cysteine 705. Positions 781–803 (EAHSSSPAGSPPSEPNCLLELQT) are disordered.

Ca(2+) serves as cofactor.

It is found in the cytoplasm. The protein resides in the cytosol. Its subcellular location is the cell membrane. In terms of biological role, ca(2+)-dependent Ras GTPase-activating protein, that may play a role in the Ras-MAPK pathway. In Homo sapiens (Human), this protein is Ras GTPase-activating protein 4B (RASA4B).